The following is a 162-amino-acid chain: Single-stranded DNA-binding protein 1 (162 aa).

In terms of domain architecture, SSB spans 5-110 (LNKVMLIGHL…IVCTDMQMLG (106 aa)). Residues 110–162 (GAKDSGGGTSDASYSQNRPSYSRPSRPEPSSGNYGASPSSGGAQEFEKDDLPF) form a disordered region. The span at 122–140 (SYSQNRPSYSRPSRPEPSS) shows a compositional bias: low complexity. Polar residues predominate over residues 141–151 (GNYGASPSSGG).

As to quaternary structure, homotetramer.

This is Single-stranded DNA-binding protein 1 (ssb1) from Chlorobaculum tepidum (strain ATCC 49652 / DSM 12025 / NBRC 103806 / TLS) (Chlorobium tepidum).